A 310-amino-acid polypeptide reads, in one-letter code: Low-salt glycan biosynthesis protein Agl12 (310 aa).

NAD(+)-binding positions include 7–13 (GGAGFIG), 32–35 (DALT), and 58–59 (DI). A substrate-binding site is contributed by S82. T97 contributes to the NAD(+) binding site. Residues T122 and 122–124 (TDE) contribute to the substrate site. D123 (proton donor) is an active-site residue. Active-site proton acceptor residues include E124 and Y146. Residue 146-150 (YSATK) coordinates NAD(+). N175 contacts substrate. N176 lines the NAD(+) pocket. Substrate contacts are provided by residues 185–186 (KL), 201–203 (PVY), R210, N245, and 269–272 (RAGH).

This sequence belongs to the NAD(P)-dependent epimerase/dehydratase family. dTDP-glucose dehydratase subfamily. Requires NAD(+) as cofactor.

It participates in protein modification; protein glycosylation. It functions in the pathway cell surface structure biogenesis; S-layer biogenesis. Lyase involved in N-glycan biosynthetic pathway that takes place under low-salt conditions (1.75 M instead of 3.4 M). Participates in the formation of the tetrasaccharide present at 'Asn-532' of S-layer glycoprotein Csg, consisting of a sulfated hexose, 2 hexoses and rhamnose. Involved in the addition of final rhamnose (sugar 4) of the tetrasaccharide on the dolichol phosphate carrier. In Haloferax volcanii (strain ATCC 29605 / DSM 3757 / JCM 8879 / NBRC 14742 / NCIMB 2012 / VKM B-1768 / DS2) (Halobacterium volcanii), this protein is Low-salt glycan biosynthesis protein Agl12 (agl12).